The chain runs to 95 residues: 1,2-phenylacetyl-CoA epoxidase, subunit B (95 aa).

As to quaternary structure, homotrimer. Forms a stable heterodimer with PaaC. Probably forms an oligomer with PaaAC.

The protein operates within aromatic compound metabolism; phenylacetate degradation. In terms of biological role, component of 1,2-phenylacetyl-CoA epoxidase multicomponent enzyme system which catalyzes the reduction of phenylacetyl-CoA (PA-CoA) to form 1,2-epoxyphenylacetyl-CoA. The subunit B may play a regulatory role or be directly involved in electron transport. The chain is 1,2-phenylacetyl-CoA epoxidase, subunit B (paaB) from Escherichia coli (strain K12).